Consider the following 362-residue polypeptide: Phospho-N-acetylmuramoyl-pentapeptide-transferase (362 aa).

Helical transmembrane passes span 28-48 (GATVTALLISFLFGPRIIALL), 73-93 (TPTMGGFLILVGLVPSVLLWA), 100-120 (VWIVLFVTLGFGAVGFADDYL), 134-154 (VKLFFEFVIALIAMWALVLVS), 169-189 (TLLIELGGFFFLFGALVIVGS), 201-221 (GLAIVPVMIAAASLGLIVYLV), 241-261 (LAVFCGALIGAGLGFLWYNAP), 264-284 (MVFMGDTGSLALGGALGAIAV), 290-310 (LVLAIIGGLFVLEAVSVIVQV), and 339-359 (TVVVRFWIISVVLAMAGLATL).

The protein belongs to the glycosyltransferase 4 family. MraY subfamily. It depends on Mg(2+) as a cofactor.

The protein localises to the cell inner membrane. The catalysed reaction is UDP-N-acetyl-alpha-D-muramoyl-L-alanyl-gamma-D-glutamyl-meso-2,6-diaminopimeloyl-D-alanyl-D-alanine + di-trans,octa-cis-undecaprenyl phosphate = di-trans,octa-cis-undecaprenyl diphospho-N-acetyl-alpha-D-muramoyl-L-alanyl-D-glutamyl-meso-2,6-diaminopimeloyl-D-alanyl-D-alanine + UMP. It functions in the pathway cell wall biogenesis; peptidoglycan biosynthesis. Functionally, catalyzes the initial step of the lipid cycle reactions in the biosynthesis of the cell wall peptidoglycan: transfers peptidoglycan precursor phospho-MurNAc-pentapeptide from UDP-MurNAc-pentapeptide onto the lipid carrier undecaprenyl phosphate, yielding undecaprenyl-pyrophosphoryl-MurNAc-pentapeptide, known as lipid I. In Parvibaculum lavamentivorans (strain DS-1 / DSM 13023 / NCIMB 13966), this protein is Phospho-N-acetylmuramoyl-pentapeptide-transferase.